We begin with the raw amino-acid sequence, 782 residues long: Coiled-coil alpha-helical rod protein 1 (782 aa).

2 stretches are compositionally biased toward basic and acidic residues: residues 62 to 74 and 208 to 218; these read ERDV…EPGR and ETRRAGEAKEL. Disordered regions lie at residues 62 to 82 and 177 to 218; these read ERDV…WGLE and EQLS…AKEL. Coiled-coil stretches lie at residues 82-314, 344-437, and 498-691; these read EGSQ…ELTR, LMVQ…NAVS, and VADV…QQEG.

Its subcellular location is the cytoplasm. The protein resides in the nucleus. In terms of biological role, may be a regulator of keratinocyte proliferation or differentiation. This is Coiled-coil alpha-helical rod protein 1 (CCHCR1) from Pan troglodytes (Chimpanzee).